The following is a 117-amino-acid chain: Holo-[acyl-carrier-protein] synthase (117 aa).

Mg(2+) is bound by residues Asp-8 and Glu-59.

The protein belongs to the P-Pant transferase superfamily. AcpS family. Mg(2+) serves as cofactor.

The protein localises to the cytoplasm. It carries out the reaction apo-[ACP] + CoA = holo-[ACP] + adenosine 3',5'-bisphosphate + H(+). In terms of biological role, transfers the 4'-phosphopantetheine moiety from coenzyme A to a Ser of acyl-carrier-protein. This is Holo-[acyl-carrier-protein] synthase from Staphylococcus carnosus (strain TM300).